The chain runs to 338 residues: Bifunctional methylenetetrahydrofolate dehydrogenase/cyclohydrolase 2, mitochondrial (338 aa).

Substrate contacts are provided by residues Y89–K93 and V136–L138. NAD(+) is bound by residues G205–S207 and R238. Residue P314 to G318 coordinates substrate.

It belongs to the tetrahydrofolate dehydrogenase/cyclohydrolase family. It depends on Mg(2+) as a cofactor. Widely expressed.

The protein localises to the mitochondrion inner membrane. The enzyme catalyses (6R)-5,10-methylene-5,6,7,8-tetrahydrofolate + NAD(+) = (6R)-5,10-methenyltetrahydrofolate + NADH. It catalyses the reaction (6R)-5,10-methenyltetrahydrofolate + H2O = (6R)-10-formyltetrahydrofolate + H(+). The catalysed reaction is (6R)-5,10-methylene-5,6,7,8-tetrahydrofolate + NADP(+) = (6R)-5,10-methenyltetrahydrofolate + NADPH. It functions in the pathway one-carbon metabolism; tetrahydrofolate interconversion. In terms of biological role, bifunctional mitochondrial folate-interconverting enzyme that has both NAD/NADP-dependent methylenetetrahydrofolate dehydrogenase and methenyltetrahydrofolate cyclohydrolase activities. This is Bifunctional methylenetetrahydrofolate dehydrogenase/cyclohydrolase 2, mitochondrial from Mus musculus (Mouse).